Here is a 334-residue protein sequence, read N- to C-terminus: Acryloyl-coenzyme A reductase (334 aa).

C38 serves as a coordination point for Zn(2+). Y39 provides a ligand contact to NADP(+). The Zn(2+) site is built by H60, D90, C93, C96, C104, and C146. Residues 173 to 176 (SGGV) and 195 to 197 (TTS) contribute to the NADP(+) site.

The protein belongs to the zinc-containing alcohol dehydrogenase family. Monomer. Requires Zn(2+) as cofactor.

It carries out the reaction propanoyl-CoA + NADP(+) = acryloyl-CoA + NADPH + H(+). Its function is as follows. Plays a role in autotrophic carbon fixation via the 3-hydroxypropionate/4-hydroxybutyrate cycle. Catalyzes the acryloyl-CoA dependent NADPH oxidation and formation of propionyl-CoA. Inactive towards 3-hydroxypropionyl-CoA, NADH and crotonyl-CoA. In Sulfurisphaera tokodaii (strain DSM 16993 / JCM 10545 / NBRC 100140 / 7) (Sulfolobus tokodaii), this protein is Acryloyl-coenzyme A reductase.